The sequence spans 315 residues: Olfactory receptor 11A1 (315 aa).

Over 1–27 (MEIVSTGNETITEFVLLGFYDIPELHF) the chain is Extracellular. An N-linked (GlcNAc...) asparagine glycan is attached at Asn8. The chain crosses the membrane as a helical span at residues 28 to 48 (LFFIVFTAVYVFIIIGNMLII). Residues 49–56 (VAVVSSQR) are Cytoplasmic-facing. The chain crosses the membrane as a helical span at residues 57–77 (LHKPMYIFLANLSFLDILYTS). The Extracellular portion of the chain corresponds to 78–100 (AVMPKMLEGFLQEATISVAGCLL). Cys98 and Cys190 form a disulfide bridge. Residues 101-121 (QFFIFGSLATAECLLLAVMAY) form a helical membrane-spanning segment. Residues 122–140 (DRYLAICYPLHYPLLMGPR) are Cytoplasmic-facing. A helical transmembrane segment spans residues 141-161 (RYMGLVVTTWLSGFVVDGLVV). At 162 to 198 (ALVAQLRFCGPNHIDQFYCDFMLFVGLACSDPRVAQV) the chain is on the extracellular side. The helical transmembrane segment at 199–218 (TTLILSVFCLTIPFGLILTS) threads the bilayer. The Cytoplasmic segment spans residues 219–238 (YARIVVAVLRVPAGASRRRA). Residues 239–259 (FSTCSSHLAVVTTFYGTLMIF) traverse the membrane as a helical segment. The Extracellular segment spans residues 260-272 (YVAPSAVHSQLLS). A helical membrane pass occupies residues 273–293 (KVFSLLYTVVTPLFNPVIYTM). At 294–315 (RNKEVHQALRKILCIKQTETLD) the chain is on the cytoplasmic side.

Belongs to the G-protein coupled receptor 1 family.

Its subcellular location is the cell membrane. Functionally, odorant receptor. The sequence is that of Olfactory receptor 11A1 (OR11A1) from Homo sapiens (Human).